A 141-amino-acid polypeptide reads, in one-letter code: Ubiquitin-like protein ATG12 (141 aa).

The disordered stretch occupies residues 1–53 (MSEDSEVVLQLPSAPVGAGGESLPELSPETATPEPPSSAAVSPGTEEPPGDTK). Over residues 23-40 (LPELSPETATPEPPSSAA) the composition is skewed to low complexity. Gly141 participates in a covalent cross-link: Glycyl lysine isopeptide (Gly-Lys) (interchain with K-? in acceptor protein).

Belongs to the ATG12 family. As to quaternary structure, forms a conjugate with ATG5. Part of the minor complex composed of 4 sets of ATG12-ATG5 and ATG16L1 (400 kDa); this complex interacts with ATG3 leading to disruption of ATG7 interaction and promotion of ATG8-like proteins lipidation. Forms an 800-kDa complex composed of ATG12-ATG5 and ATG16L2. Interacts with DHX58/RIG-1, IFIH1/MDA5 and MAVS/IPS-1 in monomeric form as well as in ATG12-ATG5 conjugate. The interaction with MAVS is further enhanced upon vesicular stomatitis virus (VSV) infection. Interacts with ATG3; this interaction is essential for phosphatidylethanolamine (PE)-conjugated ATG8-like proteins formation. Interacts with ATG7. Interacts with ATG10. The ATG12-ATG5 conjugate interacts with RAB33A; this interaction is bridged by ATG16L1 and promotes ATG12-ATG5-ATG16L1 complex recruitment to phagophores. Interacts with TECPR1. Interacts with SH3BGRL. The ATG12-ATG5 conjugate interacts with PDCD6IP (via the BRO1 domain); this interaction is bridged by ATG12 and promotes multiple PDCD6IP-mediated functions such as endolysosomal trafficking, macroautophagy and exosome biogenesis. Acetylated by EP300. In terms of tissue distribution, ubiquitous.

The protein resides in the cytoplasm. It is found in the preautophagosomal structure membrane. Ubiquitin-like protein involved in autophagy vesicles formation. Conjugation with ATG5 through a ubiquitin-like conjugating system involving also ATG7 as an E1-like activating enzyme and ATG10 as an E2-like conjugating enzyme, is essential for its function. The ATG12-ATG5 conjugate acts as an E3-like enzyme which is required for lipidation of ATG8 family proteins and their association to the vesicle membranes. As part of the ATG8 conjugation system with ATG5 and ATG16L1, required for recruitment of LRRK2 to stressed lysosomes and induction of LRRK2 kinase activity in response to lysosomal stress. Functionally, (Microbial infection) May act as a proviral factor. In association with ATG5, negatively regulates the innate antiviral immune response by impairing the type I IFN production pathway upon vesicular stomatitis virus (VSV) infection. The protein is Ubiquitin-like protein ATG12 of Mus musculus (Mouse).